The following is a 1116-amino-acid chain: Disease resistance protein RGA5 (1116 aa).

Residues 1-177 form a structured coiled coil (CC) domain region; the sequence is MDAPASFSLG…HHGVSANLVG (177 aa). The 285-residue stretch at 182 to 466 folds into the NB-ARC domain; sequence KTKLNRWLSD…WSAEGFVSAN (285 aa). LRR repeat units follow at residues 608–631, 633–653, 654–675, 677–701, 732–755, 786–808, 810–830, 835–857, and 858–882; these read LFQL…ISGL, YLET…LVHL, PNLL…GCMR, LRTL…ELTN, LSNL…DISS, LHKL…DNLT, LPSL…RFIF, LPVL…AGAM, and PNLQ…LFGI. A disordered region spans residues 935–971; it reads EEESHPLEKQHHKREKGSSAGHGVLEKESVEDSEKNT. Residues 958 to 971 are compositionally biased toward basic and acidic residues; that stretch reads VLEKESVEDSEKNT. The HMA domain occupies 997–1066; sequence RTKIVVKVHM…KCGLAELLMV (70 aa). An HMA-like domain region spans residues 1000–1070; the sequence is IVVKVHMPCG…AELLMVELVE (71 aa).

It belongs to the disease resistance NB-LRR family. Forms homodimer or heterodimer with RGA4 through its coiled coil (CC) domain. Interacts with AVR1-Pia and AVR-CO39 through its C-terminal part containing the HMA-like domain. Expressed in leaves.

It is found in the cytoplasm. Its function is as follows. Disease resistance (R) protein that recognizes the AVR-Pia and AVR1-CO39 effector avirulence proteins from M.oryzae. Resistance proteins guard the plant against pathogens that contain an appropriate avirulence protein via an indirect interaction with this avirulence protein. That triggers a defense system including the hypersensitive response, which restricts the pathogen growth. Contribution of RGA4 is required to recognize the effector avirulence proteins AVR-Pia and AVR1-CO39 from M.oryzae. Acts as a repressor of the RGA4-mediated cell death activation. Upon infection, recognition and binding of the AVR effectors relieve the RGA5-mediated repression and triggers the hypersensitive response. Immune response triggered by the RGA4-RGA5 -mediated recognition of AVR1-CO39 confers resistance to X.oryzae pathovars. The polypeptide is Disease resistance protein RGA5 (Oryza sativa subsp. japonica (Rice)).